A 267-amino-acid polypeptide reads, in one-letter code: Neutrophil elastase (267 aa).

The N-terminal stretch at 1 to 27 (MTLGRRLACLFLACVLPALLLGGTALA) is a signal peptide. Residues 28-29 (SE) constitute a propeptide that is removed on maturation. The region spanning 30–247 (IVGGRRARPH…FVNWIDSIIQ (218 aa)) is the Peptidase S1 domain. Cysteine 55 and cysteine 71 are joined by a disulfide. Histidine 70 (charge relay system) is an active-site residue. N-linked (GlcNAc...) asparagine glycosylation is present at asparagine 88. Catalysis depends on aspartate 117, which acts as the Charge relay system. N-linked (GlcNAc...) asparagine glycans are attached at residues asparagine 124 and asparagine 173. Disulfide bonds link cysteine 151–cysteine 208, cysteine 181–cysteine 187, and cysteine 198–cysteine 223. Catalysis depends on serine 202, which acts as the Charge relay system.

It belongs to the peptidase S1 family. Elastase subfamily. Interacts with NOTCH2NL. Interacts with agaphelin, an antihemostatic protein from Anopheles gambiae. Bone marrow cells. Neutrophil.

It localises to the cytoplasmic vesicle. It is found in the phagosome. It catalyses the reaction Hydrolysis of proteins, including elastin. Preferential cleavage: Val-|-Xaa &gt; Ala-|-Xaa.. Functionally, serine protease that modifies the functions of natural killer cells, monocytes and granulocytes. Inhibits C5a-dependent neutrophil enzyme release and chemotaxis. Promotes cleavage of GSDMB, thereby inhibiting pyroptosis. Promotes blood coagulation. Through the activation of the platelet fibrinogen receptor integrin alpha-IIb/beta-3, potentiates platelet aggregation induced by a threshold concentration of cathepsin G (CTSG). Cleaves and thus inactivates tissue factor pathway inhibitor (TFPI). Capable of killing E.coli but not S.aureus in vitro; digests outer membrane protein A (ompA) in E.coli and K.pneumoniae. The chain is Neutrophil elastase (ELANE) from Homo sapiens (Human).